We begin with the raw amino-acid sequence, 434 residues long: MRVVILGSGVVGVTSAWYLAKEGHDVTVIDRQDGPAQETSAGNAGQISPGYAAPWAAPGVPLKAIKWMFQRHAPLAIRLDGSSLQLRWMWQMLRNCDTSHYMVNKSRMVRLAEYSRDCLKDLRAATGIQYEGRQGGTLQLFRTEQQFDNAAKDIAVLDDAGVPYSLLTAEQLATVEPALAKVAHKLTGGLRLPNDETGDCKLFTERLAKMAEQAGVKFIFNRSVDKLLVEGDQIAGVLCGDDIIKADAYVVAFGAYSTALLAGLVSIPVYPLKGYSLTIPITDPASAPFSTVLDETYKIAITRFDDRIRVGGMAEIVGFNTQLAPARRETLEMVVRDLYPHGGDISQAVFWSGLRPMTPDGTPIVGRTPLKNLYLNTGHGTLGWTMACGSGQLLADIIQGRRPAIVADDLSVARYRAGFQPLNIAPLHDIHPIR.

Position 3-17 (3-17) interacts with FAD; it reads VVILGSGVVGVTSAW.

This sequence belongs to the DadA oxidoreductase family. FAD is required as a cofactor.

It carries out the reaction a D-alpha-amino acid + A + H2O = a 2-oxocarboxylate + AH2 + NH4(+). The protein operates within amino-acid degradation; D-alanine degradation; NH(3) and pyruvate from D-alanine: step 1/1. Oxidative deamination of D-amino acids. This chain is D-amino acid dehydrogenase, found in Yersinia pseudotuberculosis serotype O:1b (strain IP 31758).